The following is a 272-amino-acid chain: Imidazole glycerol phosphate synthase subunit HisF (272 aa).

Catalysis depends on residues Asp11 and Asp130.

It belongs to the HisA/HisF family. As to quaternary structure, heterodimer of HisH and HisF.

The protein localises to the cytoplasm. The catalysed reaction is 5-[(5-phospho-1-deoxy-D-ribulos-1-ylimino)methylamino]-1-(5-phospho-beta-D-ribosyl)imidazole-4-carboxamide + L-glutamine = D-erythro-1-(imidazol-4-yl)glycerol 3-phosphate + 5-amino-1-(5-phospho-beta-D-ribosyl)imidazole-4-carboxamide + L-glutamate + H(+). It participates in amino-acid biosynthesis; L-histidine biosynthesis; L-histidine from 5-phospho-alpha-D-ribose 1-diphosphate: step 5/9. IGPS catalyzes the conversion of PRFAR and glutamine to IGP, AICAR and glutamate. The HisF subunit catalyzes the cyclization activity that produces IGP and AICAR from PRFAR using the ammonia provided by the HisH subunit. The chain is Imidazole glycerol phosphate synthase subunit HisF from Methanococcus vannielii (strain ATCC 35089 / DSM 1224 / JCM 13029 / OCM 148 / SB).